A 280-amino-acid chain; its full sequence is UPF0276 protein CC_2906 (280 aa).

It belongs to the UPF0276 family.

This chain is UPF0276 protein CC_2906, found in Caulobacter vibrioides (strain ATCC 19089 / CIP 103742 / CB 15) (Caulobacter crescentus).